A 496-amino-acid polypeptide reads, in one-letter code: MNEFHQFEPYTLTSFDHAFPPAFYHFVALSFAIQKPQDAIPTLESAILRMVGELPFLTGEVGPCPDAKKNGVMRVQPSLNTTDKSSIVRVKEHPRFVLSSTPTPGKGTGTGQHHARCVDLSGAIVPEFDYSSISAPVFRAQINVLADGIVLCLAINHMVIDGTGTGALVDILATVCREGEGSVNYLRTCGAIQESTRRDLQDIGTQGQLPDGVQSSDDPTDGAGDIFEPGKSYANHTLVFSDAHVKALKGRCNAILAEMFPAASTGPPNPGTTVRDQRSLVSSNDVLTALLWMSISQVRSDPTQPREQSSVSVPVNTRTRFSPSLPDNYLGNAVLVTESKLALSELQCLNDDGHLGETSTQGIRLLSLLAHRVRSSIAAVDDESLRVSLRRAHHASDWETLLARPGDVVVSSLRSWNSFGLDFGPTLGGIAALELVPTFAIEGECIIKPCRCDSSGSGIWEVMVTLKPEHMHALRENQLMRCVLQCDYPVEVYRAG.

Polar residues predominate over residues Ile-203–Asp-217. Residues Ile-203 to Glu-228 form a disordered region.

Belongs to the fumigaclavine B O-acetyltransferase family.

It carries out the reaction campesine A + acetyl-CoA = campesine C + CoA. The protein operates within alkaloid biosynthesis. In terms of biological role, O-acetyltransferase; part of the gene cluster that mediates the biosynthesis of campesine G, a dimeric indole piperazine alkaloid that shows good insecticidal activity Galleria mellonella. Within the pathway, cpsE acetylates N13 of campesine A to produce campesine C. CpsE produces an inseparable mixture of two acyl-atropisomers due to the spontaneous rotation of an acyl group at N13 of piperazine ring. The non-canonical non-ribosomal peptide synthetase cpsA catalyzes the first steps of the pathway by producing L-tryptophanal and L-valinal from their respective amino-acids. These products condensate spontaneously to form trypyl-valyl pyrazine also known as didehydrocampesine A. The NmrA-like family domain-containing oxidoreductase cpsB is the next enzyme in cps pathway and reduces the unstable didehydrocampesine A to campesine A. The methyltransferase cpsF and the acetyltransferase cpsE both recognize N13 of piperazine ring to carry out methylation and acetylation of campesine A to produce campesine C and B, respectively. The cytochrome P450 monooxygenase cpsD then acts as a dimerase that catalyzes oxidative heterocoupling between campesine B and C to produce heterodimers with unexpected 6/5/6/6/6/6/5/6 eight-ring scaffold called campesine D. Finally,the cytochrome P450 monooxygenase cpsC is a regioselective dehydrogenase that catalyzes dehydrogenation reaction towards C2-N1 to produce campesine G. In Aspergillus campestris (strain IBT 28561), this protein is O-acetyltransferase cpsE.